Here is a 147-residue protein sequence, read N- to C-terminus: Secreted hemophore CSA2 (147 aa).

The signal sequence occupies residues 1–20 (MKFSTILAIPFAIAFANAAA). Positions 34–145 (NPYTIYPPVP…SALDAAATAT (112 aa)) constitute a CFEM domain. Intrachain disulfides connect Cys62-Cys102, Cys66-Cys97, Cys76-Cys83, and Cys85-Cys118. A heme-binding site is contributed by Asp80.

The protein belongs to the RBT5 family. Homodimer. The possibility of a transient honotrimer assembly of the holo protein is not ruled out.

It localises to the secreted. Functionally, secreted heme-binding protein involved in the utilization of iron from human hemoglobin during hyphal growth. May also play a role in non-hemoglobin iron utilization. Heme transfer occurs between PGA7, RBT5 and CSA2 supporting a model in which the 3 CFEM proteins cooperate in a heme-acquisition system and form a cross-cell wall heme-transfer cascade. The ability to acquire iron from host tissues is a major virulence factor of pathogenic microorganisms. The sequence is that of Secreted hemophore CSA2 (CSA2) from Candida albicans (strain SC5314 / ATCC MYA-2876) (Yeast).